We begin with the raw amino-acid sequence, 551 residues long: MIGAFKRLGQKLFLTLLTASLIFASSIVTANASIAPNFKVFVMGPLEKVTDFNAFKDQLITLKNNGVYGITTDIWWGYVENAGENQFDWSYYKTYADTVRAAGLKWVPIMSTHACGGNVGDTVNIPIPSWVWTKDTQDNMQYKDEAGNWDNEAVSPWYSGLTQLYNEFYSSFASNFSSYKDIITKIYISGGPSGELRYPSYNPSHGWTYPGRGSLQCYSKAAITSFQNAMKSKYGTIAAVNSAWGTSLTDFSQISPPTDGDNFFTNGYKTTYGNDFLTWYQSVLTNELANIASVAHSCFDPVFNVPIGAKIAGVHWLYNSPTMPHAAEYCAGYYNYSTLLDQFKASNLAMTFTCLEMDDSNAYVSPYYSAPMTLVHYVANLANNKGIVHNGENALAISNNNQAYVNCANELTGYNFSGFTLLRLSNIVNSDGSVTSEMAPFVINIVTLTPNGTIPVTFTINNATTYYGQNVYIVGSTSDLGNWNTTYARGPASCPNYPTWTITLNLLPGEQIQFKAVKIDSSGNVTWEGGSNHTYTVPTSGTGSVTITWQN.

The first 32 residues, 1 to 32 (MIGAFKRLGQKLFLTLLTASLIFASSIVTANA), serve as a signal peptide directing secretion. D73 is a substrate binding site. Residue E80 participates in Ca(2+) binding. Substrate is bound by residues H113 and D121. E167 contacts Ca(2+). Residue E195 is the Proton donor of the active site. Positions 310, 315, and 353 each coordinate substrate. E392 acts as the Proton acceptor in catalysis. Substrate is bound by residues 393–394 (NA) and R423. Residues 448–551 (LTPNGTIPVT…TGSVTITWQN (104 aa)) enclose the CBM20 domain.

Belongs to the glycosyl hydrolase 14 family. In terms of assembly, monomer. Requires Ca(2+) as cofactor.

The catalysed reaction is Hydrolysis of (1-&gt;4)-alpha-D-glucosidic linkages in polysaccharides so as to remove successive maltose units from the non-reducing ends of the chains.. The polypeptide is Thermophilic beta-amylase (Thermoanaerobacterium thermosulfurigenes (Clostridium thermosulfurogenes)).